A 362-amino-acid chain; its full sequence is GMP reductase (362 aa).

Residues 26–27 (SR), Lys78, 129–131 (DVA), and 180–181 (IG) each bind NADP(+). K(+)-binding residues include Gly181, Gly183, and Cys186. Cys186 serves as the catalytic Thioimidate intermediate. Thr188 serves as the catalytic Proton donor/acceptor. Arg189 provides a ligand contact to K(+). GMP is bound by residues 219-221 (DGG), 242-243 (GG), 268-270 (GMS), and 286-290 (RASEG). Residues Met269, 285–286 (YR), and 314–317 (STCT) contribute to the NADP(+) site.

It belongs to the IMPDH/GMPR family.

The catalysed reaction is IMP + NH4(+) + NADP(+) = GMP + NADPH + 2 H(+). In terms of biological role, catalyzes the irreversible NADPH-dependent deamination of GMP to IMP. It functions in the conversion of nucleobase, nucleoside and nucleotide derivatives of G to A nucleotides, and in maintaining the intracellular balance of A and G nucleotides. The chain is GMP reductase from Phytophthora infestans (Potato late blight agent).